The sequence spans 205 residues: Thymidine kinase (205 aa).

Residues 9-16 (SAMNAGKS) and 87-90 (DESQ) contribute to the ATP site. E88 acts as the Proton acceptor in catalysis. Residues C145, C147, C182, and H185 each contribute to the Zn(2+) site.

This sequence belongs to the thymidine kinase family. In terms of assembly, homotetramer.

It is found in the cytoplasm. The enzyme catalyses thymidine + ATP = dTMP + ADP + H(+). This chain is Thymidine kinase, found in Salmonella choleraesuis (strain SC-B67).